Here is a 234-residue protein sequence, read N- to C-terminus: Large ribosomal subunit protein uL1 (234 aa).

Belongs to the universal ribosomal protein uL1 family. As to quaternary structure, part of the 50S ribosomal subunit.

Its function is as follows. Binds directly to 23S rRNA. The L1 stalk is quite mobile in the ribosome, and is involved in E site tRNA release. Functionally, protein L1 is also a translational repressor protein, it controls the translation of the L11 operon by binding to its mRNA. This chain is Large ribosomal subunit protein uL1, found in Psychromonas ingrahamii (strain DSM 17664 / CCUG 51855 / 37).